Consider the following 161-residue polypeptide: Dehydrin DHN3 (161 aa).

The span at 1–12 (MEHGHATNRVDE) shows a compositional bias: basic and acidic residues. The segment at 1–161 (MEHGHATNRV…KIKEKLPGQH (161 aa)) is disordered. Residues 20-38 (HGVGTGMGAHGGVGTGAAA) are compositionally biased toward gly residues. Composition is skewed to low complexity over residues 93–107 (DQQQ…HGHT) and 115–130 (HGAT…QGHT). Tandem repeats lie at residues 101–123 (YGQH…TGGT) and 124–144 (YGQQ…DGTG). The tract at residues 101-144 (YGQHGHTGMTGTGEHGATATGGTYGQQGHTGMTGTGAHGTDGTG) is 2 X approximate tandem repeats. The segment covering 131-142 (GMTGTGAHGTDG) has biased composition (gly residues). Positions 143 to 161 (TGEKKGIMDKIKEKLPGQH) are enriched in basic and acidic residues.

It belongs to the plant dehydrin family.

The chain is Dehydrin DHN3 (DHN3) from Hordeum vulgare (Barley).